The sequence spans 249 residues: NADH dehydrogenase [ubiquinone] flavoprotein 2, mitochondrial (249 aa).

The N-terminal 32 residues, 1-32 (MFLSAALRARAAGLAAHWGKHIRNLHKTAVQN), are a transit peptide targeting the mitochondrion. Lys-61 carries the N6-acetyllysine modification. 4 residues coordinate [2Fe-2S] cluster: Cys-135, Cys-140, Cys-176, and Cys-180. Tyr-193 is modified (phosphotyrosine; by SRC). Residues 213-249 (IPKPGPRSGRFSCEPAGGLTSLTEPPKGPGFGVQAGL) are disordered.

This sequence belongs to the complex I 24 kDa subunit family. Core subunit of respiratory chain NADH dehydrogenase (Complex I) which is composed of 45 different subunits. This is a component of the flavoprotein-sulfur (FP) fragment of the enzyme. It depends on [2Fe-2S] cluster as a cofactor.

Its subcellular location is the mitochondrion inner membrane. The catalysed reaction is a ubiquinone + NADH + 5 H(+)(in) = a ubiquinol + NAD(+) + 4 H(+)(out). Its function is as follows. Core subunit of the mitochondrial membrane respiratory chain NADH dehydrogenase (Complex I) which catalyzes electron transfer from NADH through the respiratory chain, using ubiquinone as an electron acceptor. Parts of the peripheral arm of the enzyme, where the electrons from NADH are accepted by flavin mononucleotide (FMN) and then passed along a chain of iron-sulfur clusters by electron tunnelling to the final acceptor ubiquinone. Contains one iron-sulfur cluster. This chain is NADH dehydrogenase [ubiquinone] flavoprotein 2, mitochondrial (NDUFV2), found in Bos taurus (Bovine).